The chain runs to 944 residues: Calcium-transporting ATPase type 2C member 2 (944 aa).

Residues 1-104 are Cytoplasmic-facing; it reads MGRRLKFLQK…DNAEPVWKKY (104 aa). The segment at 69–93 is interaction with ORAI1; it reads VDLDSGLSEFAVAQRRLVHGWNEFV. The helical transmembrane segment at 105–125 threads the bilayer; the sequence is LDQFRNPLILLLLGSSVVSVL. Over 126–127 the chain is Extracellular; sequence TK. The chain crosses the membrane as a helical span at residues 128–148; sequence EYEDAVSIALAVLIVVTVGFI. At 149 to 229 the chain is on the cytoplasmic side; the sequence is QEYRSEKSLE…EVEPCGKTDS (81 aa). Residues 230–250 traverse the membrane as a helical segment; that stretch reads PLADGGDLSTLSNVVFMGTLV. At 251–291 the chain is on the extracellular side; that stretch reads QCGKGQGVVIGTGEQSQFGEVFKMMRAEETPKTPLQKSMDK. A Phosphothreonine modification is found at T262. At S266 the chain carries Phosphoserine. The chain crosses the membrane as a helical span at residues 292 to 312; sequence LGKQLTIFSFGIIGLLMLVGW. Residues 313–329 lie on the Cytoplasmic side of the membrane; the sequence is VQGKPFLSMFTVGVSLA. The Ca(2+) site is built by V330, A331, I333, and E335. Residues 330–350 form a helical membrane-spanning segment; the sequence is VAAIPEGLPIVVMVTLVLGVL. The Extracellular portion of the chain corresponds to 351 to 748; that stretch reads RMAKKRVIVK…IAALSLITLS (398 aa). Residue D377 is the 4-aspartylphosphate intermediate of the active site. The Mg(2+) site is built by D672 and D676. The chain crosses the membrane as a helical span at residues 749 to 769; the sequence is TVCNLPSPLNAMQILWVNIIM. Ca(2+)-binding residues include N766 and D770. The Cytoplasmic segment spans residues 770–802; it reads DGPPAQSLGVEPVDRDALRRPPRSVGDTILNRA. A helical transmembrane segment spans residues 803–823; the sequence is LILRVLMSAAVIIGGTLFIFW. Residues 824-835 lie on the Extracellular side of the membrane; that stretch reads REIPANGTSTPR. The chain crosses the membrane as a helical span at residues 836-853; that stretch reads TTTMAFTCFVFFDLFNAL. Residues 854–872 lie on the Cytoplasmic side of the membrane; the sequence is SCRSQTKLIFEIGFFRNRM. Residues 873–893 traverse the membrane as a helical segment; that stretch reads FLYSVLGSLLGQLAVIYAPPL. Over 894-903 the chain is Extracellular; it reads QKVFQTENLS. Residues 904–924 traverse the membrane as a helical segment; sequence ALDLLLLTGLASSVFILSELL. At 925–944 the chain is on the cytoplasmic side; sequence KLWEKFLSRARPTQMLPEAV.

This sequence belongs to the cation transport ATPase (P-type) (TC 3.A.3) family. Type IIA subfamily. In terms of assembly, interacts (via N-terminus) with ORAI1 (via N- and C-termini); this interaction regulates Ca(2+) influx at the plasma membrane. In terms of tissue distribution, expressed in hippocampal neurons (at protein level). Expressed in lactating mammary epithelium (at protein level).

Its subcellular location is the golgi apparatus. It localises to the trans-Golgi network membrane. The protein localises to the cell membrane. The protein resides in the basolateral cell membrane. It catalyses the reaction Ca(2+)(in) + ATP + H2O = Ca(2+)(out) + ADP + phosphate + H(+). The catalysed reaction is Mn(2+)(in) + ATP + H2O = Mn(2+)(out) + ADP + phosphate + H(+). Its function is as follows. ATP-driven pump that supplies the Golgi apparatus with Ca(2+) and Mn(2+) ions, both essential cofactors for processing and trafficking of newly synthesized proteins in the secretory pathway. Within a catalytic cycle, acquires Ca(2+) or Mn(2+) ions on the cytoplasmic side of the membrane and delivers them to the lumenal side. The transfer of ions across the membrane is coupled to ATP hydrolysis and is associated with a transient phosphorylation that shifts the pump conformation from inward-facing to outward-facing state. Induces Ca(2+) influx independently of its ATP-driven pump function. At the basolateral membrane of mammary epithelial cells, interacts with Ca(2+) channel ORAI1 and mediates Ca(2+) entry independently of the Ca(2+) content of endoplasmic reticulum or Golgi stores. May facilitate transepithelial transport of large quantities of Ca(2+) for milk secretion via activation of Ca(2+) influx channels at the plasma membrane and active Ca(2+) transport at the Golgi apparatus. This Mus musculus (Mouse) protein is Calcium-transporting ATPase type 2C member 2.